A 75-amino-acid polypeptide reads, in one-letter code: MKLCLTFLLVLMILASVTGEKLSEQTLRRAARKNKGPRCWVGRVHCTYHKDCCPSVCCFKGRCKPQSWGCWSGPT.

Positions 1 to 19 (MKLCLTFLLVLMILASVTG) are cleaved as a signal peptide. Positions 20–34 (EKLSEQTLRRAARKN) are excised as a propeptide. Intrachain disulfides connect Cys-39-Cys-53, Cys-46-Cys-58, Cys-52-Cys-63, and Cys-57-Cys-70.

This sequence belongs to the conotoxin I1 superfamily. As to expression, expressed by the venom duct.

Its subcellular location is the secreted. Iota-conotoxins bind to voltage-gated sodium channels (Nav) and act as agonists by shifting the voltage-dependence of activation to more hyperpolarized levels. Produces general excitatory symptoms. The polypeptide is Iota-conotoxin-like R11.3 (Conus radiatus (Rayed cone)).